A 648-amino-acid polypeptide reads, in one-letter code: tRNA 5-methylaminomethyl-2-thiouridine biosynthesis bifunctional protein MnmC (648 aa).

The segment at 1-228 (MTDRLVPASL…VDDLLVGEYA (228 aa)) is tRNA (mnm(5)s(2)U34)-methyltransferase. The tract at residues 252-648 (IGAGLAGCAV…LRARRVGRAG (397 aa)) is FAD-dependent cmnm(5)s(2)U34 oxidoreductase.

The protein in the N-terminal section; belongs to the methyltransferase superfamily. tRNA (mnm(5)s(2)U34)-methyltransferase family. In the C-terminal section; belongs to the DAO family. The cofactor is FAD.

The protein resides in the cytoplasm. The enzyme catalyses 5-aminomethyl-2-thiouridine(34) in tRNA + S-adenosyl-L-methionine = 5-methylaminomethyl-2-thiouridine(34) in tRNA + S-adenosyl-L-homocysteine + H(+). Catalyzes the last two steps in the biosynthesis of 5-methylaminomethyl-2-thiouridine (mnm(5)s(2)U) at the wobble position (U34) in tRNA. Catalyzes the FAD-dependent demodification of cmnm(5)s(2)U34 to nm(5)s(2)U34, followed by the transfer of a methyl group from S-adenosyl-L-methionine to nm(5)s(2)U34, to form mnm(5)s(2)U34. The polypeptide is tRNA 5-methylaminomethyl-2-thiouridine biosynthesis bifunctional protein MnmC (Burkholderia lata (strain ATCC 17760 / DSM 23089 / LMG 22485 / NCIMB 9086 / R18194 / 383)).